The chain runs to 863 residues: Leucine--tRNA ligase (863 aa).

The 'HIGH' region signature appears at 42–53; the sequence is PYPSGSGLHVGH. The short motif at 635–639 is the 'KMSKS' region element; it reads KMSKS. An ATP-binding site is contributed by K638.

Belongs to the class-I aminoacyl-tRNA synthetase family.

The protein resides in the cytoplasm. The enzyme catalyses tRNA(Leu) + L-leucine + ATP = L-leucyl-tRNA(Leu) + AMP + diphosphate. This Salinibacter ruber (strain DSM 13855 / M31) protein is Leucine--tRNA ligase.